A 331-amino-acid polypeptide reads, in one-letter code: Glycerophosphodiester phosphodiesterase 1 (331 aa).

Over 1 to 3 (MWL) the chain is Cytoplasmic. The helical transmembrane segment at 4–24 (WEDQGGLLGPFSFVLVLLLVV) threads the bilayer. Residues 25-248 (TRSPFNACVL…PRYSVFWKQS (224 aa)) lie on the Lumenal side of the membrane. The GP-PDE domain maps to 65–331 (VSAIAHRGGS…SMLEDCAPHF (267 aa)). Mg(2+)-binding residues include E97 and D99. N168 is a glycosylation site (N-linked (GlcNAc...) asparagine). D174 contributes to the Mg(2+) binding site. Residues 249-269 (VFVVLDILLDWSMHNVLWYLC) form a helical membrane-spanning segment. Over 270-331 (GISAFLMQKD…SMLEDCAPHF (62 aa)) the chain is Cytoplasmic.

It belongs to the glycerophosphoryl diester phosphodiesterase family. In terms of assembly, interacts with PRAF2. Interacts with RGS16. Requires Mg(2+) as cofactor. In terms of processing, N-glycosylated. As to expression, detected in heart, brain, lung, liver, skeletal muscle, kidney, pituitary and testis.

It localises to the cell membrane. The protein resides in the cytoplasmic vesicle membrane. The enzyme catalyses sn-glycero-3-phospho-1D-myo-inositol + H2O = myo-inositol + sn-glycerol 3-phosphate + H(+). The catalysed reaction is 1-O-(1Z-octadecenyl)-sn-glycero-3-phospho-(N-5Z,8Z,11Z,14Z-eicosatetraenoyl)-ethanolamine + H2O = 1-O-(1Z-octadecenyl)-sn-glycero-3-phosphate + N-(5Z,8Z,11Z,14Z-eicosatetraenoyl)-ethanolamine + H(+). It carries out the reaction 1-O-(1Z-octadecenyl)-sn-glycero-3-phospho-(N-9Z-octadecenoyl)-ethanolamine + H2O = 1-O-(1Z-octadecenyl)-sn-glycero-3-phosphate + N-(9Z-octadecenoyl) ethanolamine + H(+). It catalyses the reaction 1-O-(1Z-octadecenyl)-sn-glycero-3-phospho-N-hexadecanoyl-ethanolamine + H2O = 1-O-(1Z-octadecenyl)-sn-glycero-3-phosphate + N-hexadecanoylethanolamine + H(+). The enzyme catalyses N-(4Z,7Z,10Z,13Z,16Z,19Z)-docosahexaenoyl-sn-glycero-3-phosphoethanolamine + H2O = N-(4Z,7Z,10Z,13Z,16Z,19Z)-docosahexaenoyl ethanolamine + sn-glycerol 3-phosphate + H(+). The catalysed reaction is N-eicosanoyl-sn-glycero-3-phosphoethanolamine + H2O = N-eicosanoyl ethanolamine + sn-glycerol 3-phosphate + H(+). It carries out the reaction N-hexadecanoyl-sn-glycero-3-phosphoethanolamine + H2O = N-hexadecanoylethanolamine + sn-glycerol 3-phosphate + H(+). It catalyses the reaction N-(9Z-octadecenoyl)-sn-glycero-3-phosphoethanolamine + H2O = N-(9Z-octadecenoyl) ethanolamine + sn-glycerol 3-phosphate + H(+). The enzyme catalyses N-(5Z,8Z,11Z,14Z-eicosatetraenoyl)-sn-glycero-3-phosphoethanolamine + H2O = N-(5Z,8Z,11Z,14Z-eicosatetraenoyl)-ethanolamine + sn-glycerol 3-phosphate + H(+). Inhibited by EDTA, calcium chloride, and zinc chloride. Enhanced by magnesium chloride. Glycerophosphodiester phosphodiesterase activity can be modulated by G-protein signaling pathways. Its function is as follows. Hydrolyzes the phosphodiester bond of glycerophosphodiesters such as glycerophosphoinositol (GroPIns) and glycerophosphoethanolamine (GroPEth), to yield a glycerol phosphate and an alcohol. Hydrolyzes glycerophospho-N-acylethanolamines to N-acylethanolamines in the brain and participates in bioactive N-acylethanolamine biosynthesis such as anandamide (an endocannabinoid), N-palmitoylethanolamine (an anti-inflammatory), and N-oleoylethanolamine (an anorexic). In addition, has a lysophospholipase D activity by hydrolyzing N-acyl-lysoplasmenylethanolamine (N-acyl-lysoPlsEt) to N-acylethanolamine. However lysophospholipase D activity is lower than glycerophosphodiester phosphodiesterase activity. Has little or no activity towards glycerophosphocholine. The polypeptide is Glycerophosphodiester phosphodiesterase 1 (Rattus norvegicus (Rat)).